The chain runs to 119 residues: NADH-ubiquinone oxidoreductase chain 3 (119 aa).

3 consecutive transmembrane segments (helical) span residues isoleucine 8–leucine 28, leucine 63–valine 83, and isoleucine 88–leucine 108.

This sequence belongs to the complex I subunit 3 family.

It localises to the mitochondrion membrane. It catalyses the reaction a ubiquinone + NADH + 5 H(+)(in) = a ubiquinol + NAD(+) + 4 H(+)(out). Its function is as follows. Core subunit of the mitochondrial membrane respiratory chain NADH dehydrogenase (Complex I) that is believed to belong to the minimal assembly required for catalysis. Complex I functions in the transfer of electrons from NADH to the respiratory chain. The immediate electron acceptor for the enzyme is believed to be ubiquinone. This Brassica napus (Rape) protein is NADH-ubiquinone oxidoreductase chain 3 (ND3).